A 548-amino-acid polypeptide reads, in one-letter code: MDSQRNLLVIALLFVSFMIWQAWEQDKNPQPQTQQTTQTTTTAAGSAADQGVPASGQGKLITVKTDVLDLTINTRGGDVEQALLPAYPKELGSSEPFQLLETTPQFIYQAQSGLTGRDGPDNPANGPRPLYNVEKDAFVLADGQNELQVPMTYTDAAGNTFTKTFVFKRGDYAVNVNYSVQNTGEKPLEISTFGQLKQSINLPPHRDTGSSNFALHTFRGAAYSTPDEKYEKYKFDTIADNENLNVSSKGGWVAMLQQYFATAWIPRNDGTNNFYTANLGNGIVAIGYKAQPVLVQPGQTGAMTSTLWVGPEIQDKMAAVAPHLDLTVDYGWLWFISQPLFKLLKWIHSFVGNWGFSIIIITFIVRGIMYPLTKAQYTSMAKMRMLQPKIQAMRERLGDDKQRQSQEMMALYKAEKVNPLGGCFPLIIQMPIFLALYYMLMGSIELRHAPFALWIHDLSAQDPYYILPILMGVTMFFIQKMSPTTVTDPMQQKIMTFMPVIFTVFFLWFPSGLVLYYIVSNLVTIIQQQLIYRGLEKRGLHSREKKNS.

The helical transmembrane segment at 6 to 26 (NLLVIALLFVSFMIWQAWEQD) threads the bilayer. The tract at residues 28-54 (NPQPQTQQTTQTTTTAAGSAADQGVPA) is disordered. Low complexity predominate over residues 29-42 (PQPQTQQTTQTTTT). 4 helical membrane passes run 350–370 (FVGN…GIMY), 424–444 (FPLI…MGSI), 458–478 (LSAQ…MFFI), and 499–519 (PVIF…YYIV).

Belongs to the OXA1/ALB3/YidC family. Type 1 subfamily. Interacts with the Sec translocase complex via SecD. Specifically interacts with transmembrane segments of nascent integral membrane proteins during membrane integration.

The protein resides in the cell inner membrane. In terms of biological role, required for the insertion and/or proper folding and/or complex formation of integral membrane proteins into the membrane. Involved in integration of membrane proteins that insert both dependently and independently of the Sec translocase complex, as well as at least some lipoproteins. Aids folding of multispanning membrane proteins. The protein is Membrane protein insertase YidC of Salmonella arizonae (strain ATCC BAA-731 / CDC346-86 / RSK2980).